Here is a 241-residue protein sequence, read N- to C-terminus: Large ribosomal subunit protein uL2 (241 aa).

The interval 201-241 is disordered; sequence VDHPHGGGNRQHPGRPTTVSRHAPPGRKVGSIAAKRTGLKR.

This sequence belongs to the universal ribosomal protein uL2 family. Part of the 50S ribosomal subunit. Forms a bridge to the 30S subunit in the 70S ribosome.

One of the primary rRNA binding proteins. Required for association of the 30S and 50S subunits to form the 70S ribosome, for tRNA binding and peptide bond formation. It has been suggested to have peptidyltransferase activity; this is somewhat controversial. Makes several contacts with the 16S rRNA in the 70S ribosome. This is Large ribosomal subunit protein uL2 from Methanobrevibacter smithii (strain ATCC 35061 / DSM 861 / OCM 144 / PS).